We begin with the raw amino-acid sequence, 330 residues long: Aquaporin Lacbi1:307192 (330 aa).

The Cytoplasmic segment spans residues 1–40; the sequence is MSATPIIHLRDVKKRTGVLNAWERVRNKPQVHWAMECFAE. Residues 41–61 form a helical membrane-spanning segment; that stretch reads ALGVFFYVYFGLGSTAAWVIG. Over 62-71 the chain is Extracellular; sequence NILKQSGLSS. The helical transmembrane segment at 72–92 threads the bilayer; that stretch reads VFQIGFAYAFGILFAIGVCAA. The Cytoplasmic portion of the chain corresponds to 93–124; it reads TSGGHFNPCVTIAFTIFRGFPPLKAVRYIVAQ. The short motif at 99–101 is the NPA 1 element; the sequence is NPC. Residues 125 to 145 traverse the membrane as a helical segment; it reads ILGAYIASALVYNQWKVLIVE. At 146 to 157 the chain is on the extracellular side; that stretch reads SELLLKQAGVYE. The helical transmembrane segment at 158–178 threads the bilayer; the sequence is TTMFTPNGPAGIFALYLLPGA. The Cytoplasmic segment spans residues 179 to 183; that stretch reads QTLPR. Residues 184–204 traverse the membrane as a helical segment; it reads AFLNEFVNCFVLALVIWAALD. Residues 205 to 207 lie on the Extracellular side of the membrane; that stretch reads PTS. A helical transmembrane segment spans residues 208 to 228; that stretch reads FMIPPVMAPFIIAAAYAGSIW. At 229–264 the chain is on the cytoplasmic side; the sequence is GYAVPAISLNSARDIGCRLFALTIWGKSAAGGSYSA. The NPA 2 motif lies at 238–240; that stretch reads NSA. A helical transmembrane segment spans residues 265 to 285; sequence ITALVNIPATLLAAVVYELFL. Over 286–330 the chain is Extracellular; the sequence is VDSDRVVAGSHLEFMNVAANHRRHRHQAEDDNHGDADDSSQEKPV. The interval 308 to 330 is disordered; that stretch reads RHRHQAEDDNHGDADDSSQEKPV. Basic and acidic residues predominate over residues 312–330; that stretch reads QAEDDNHGDADDSSQEKPV.

It belongs to the MIP/aquaporin (TC 1.A.8) family.

It is found in the membrane. In terms of biological role, water channel-like protein that does not show transport of water nor ammonium across membranes. In Laccaria bicolor (strain S238N-H82 / ATCC MYA-4686) (Bicoloured deceiver), this protein is Aquaporin Lacbi1:307192.